The chain runs to 158 residues: Heavy metal-associated isoprenylated plant protein 23 (158 aa).

The HMA domain maps to 31–94 (FQTVELKVRM…KAKATGKKAE (64 aa)). A metal cation-binding residues include Cys42 and Cys45. Cys155 is subject to Cysteine methyl ester. The S-farnesyl cysteine moiety is linked to residue Cys155. A propeptide spans 156 to 158 (SIM) (removed in mature form).

This sequence belongs to the HIPP family. As to quaternary structure, interacts with ZHD11/HB29.

Functionally, heavy-metal-binding protein. The sequence is that of Heavy metal-associated isoprenylated plant protein 23 from Arabidopsis thaliana (Mouse-ear cress).